The sequence spans 208 residues: MNYPNGKPYSKNKPLDGRKSSPFSSNIEYGGRGMTLEKDIEQSNTFYLKSGIAVIHKKPTPVQIVNVHYPKRSKAVINEAYFRTPSTTDYNGVYNGYYIDFEAKETKNKTSFPLNNIHAHQVEHMKNTYHQKGIVFLMIRFKSLDEVYLLPYSKFEKYWQRYINNIKKSITVEEIRKNGYHIPYQYQPRLNYLKAVDKLILDESEDRV.

The tract at residues 1 to 28 (MNYPNGKPYSKNKPLDGRKSSPFSSNIE) is disordered. 4 residues coordinate Mg(2+): threonine 87, aspartate 89, glutamate 102, and glutamine 121.

This sequence belongs to the RecU family. Requires Mg(2+) as cofactor.

It is found in the cytoplasm. It catalyses the reaction Endonucleolytic cleavage at a junction such as a reciprocal single-stranded crossover between two homologous DNA duplexes (Holliday junction).. Its function is as follows. Endonuclease that resolves Holliday junction intermediates in genetic recombination. Cleaves mobile four-strand junctions by introducing symmetrical nicks in paired strands. Promotes annealing of linear ssDNA with homologous dsDNA. Required for DNA repair, homologous recombination and chromosome segregation. The protein is Holliday junction resolvase RecU of Staphylococcus epidermidis (strain ATCC 12228 / FDA PCI 1200).